Consider the following 246-residue polypeptide: rRNA methyltransferase 2, mitochondrial (246 aa).

Residues 1–18 (MAGYLKLVCVSFQRQGFH) constitute a mitochondrion transit peptide. S-adenosyl-L-methionine-binding positions include 83 to 86 (PGAW), Asp-112, 129 to 130 (DV), and Asp-154. Lys-194 functions as the Proton acceptor in the catalytic mechanism.

The protein belongs to the class I-like SAM-binding methyltransferase superfamily. RNA methyltransferase RlmE family. Widely expressed, with highest expression in muscle, placenta, and heart.

The protein localises to the mitochondrion. It catalyses the reaction uridine(1369) in 16S rRNA + S-adenosyl-L-methionine = 2'-O-methyluridine(1369) in 16S rRNA + S-adenosyl-L-homocysteine + H(+). S-adenosyl-L-methionine-dependent 2'-O-ribose methyltransferase that catalyzes the formation of 2'-O-methyluridine at position 1369 (Um1369) in the 16S mitochondrial large subunit ribosomal RNA (mtLSU rRNA), a universally conserved modification in the peptidyl transferase domain of the mtLSU rRNA. This activity may require prior 2'-O-methylguanosine modification at position 1370 (Gm1370) by MRM3. Essential for late-stage assembly of mtLSU required for efficient translation of mitochondrial DNA encoded proteins; methyltransferase activity is not required for this function. Essential for mitochondrial respiratory function. This is rRNA methyltransferase 2, mitochondrial from Homo sapiens (Human).